Reading from the N-terminus, the 500-residue chain is 4-aminobutyrate aminotransferase, mitochondrial (500 aa).

The N-terminal 27 residues, 1-27, are a transit peptide targeting the mitochondrion; that stretch reads MAFLLTTRRLVCSSQKNLHLFTPGSRY. Residue cysteine 163 participates in [2Fe-2S] cluster binding. 164 to 165 provides a ligand contact to pyridoxal 5'-phosphate; it reads GS. Residue cysteine 166 participates in [2Fe-2S] cluster binding. Arginine 220 is a binding site for substrate. Residue lysine 231 is modified to N6-succinyllysine. Lysine 252 is modified (N6-acetyllysine; alternate). Lysine 252 is subject to N6-succinyllysine; alternate. N6-acetyllysine is present on residues lysine 279 and lysine 318. Position 357 is an N6-(pyridoxal phosphate)lysine (lysine 357). Threonine 381 is a pyridoxal 5'-phosphate binding site. Lysine 413 carries the N6-acetyllysine; alternate modification. Lysine 413 bears the N6-succinyllysine; alternate mark. Residues lysine 452 and lysine 470 each carry the N6-acetyllysine modification.

It belongs to the class-III pyridoxal-phosphate-dependent aminotransferase family. In terms of assembly, homodimer; disulfide-linked. Pyridoxal 5'-phosphate is required as a cofactor. Requires [2Fe-2S] cluster as cofactor.

Its subcellular location is the mitochondrion matrix. It carries out the reaction 4-aminobutanoate + 2-oxoglutarate = succinate semialdehyde + L-glutamate. It catalyses the reaction (S)-3-amino-2-methylpropanoate + 2-oxoglutarate = 2-methyl-3-oxopropanoate + L-glutamate. Functionally, catalyzes the conversion of gamma-aminobutyrate and L-beta-aminoisobutyrate to succinate semialdehyde and methylmalonate semialdehyde, respectively. Can also convert delta-aminovalerate and beta-alanine. The chain is 4-aminobutyrate aminotransferase, mitochondrial from Rattus norvegicus (Rat).